Consider the following 355-residue polypeptide: MKLNVNLPHHPYDILIKKGSLSQAGSWLSQLWQPQRVVIVTDNRVARLYAEKVKLSLEAAGFETFVFDFLEGEASKNLKTVNKVYEFLVKVGLTRSDGIVALGGGVVGDLAGFAASTYMRGVHFVQIPTSLTAQVDSSIGGKTGVNTPWAKNMVGTFTQPDGVLIDPEVLHTLGQRELIEGMGEVVKYGLIEDKELWDELSEMDGSPESILEHAESIIYHSCDVKRKIVVEDELDNGVRLYLNFGHTIGHAIEATAGYGKVMHGEAVAIGMVQVSRVAEKKGLMPAGITENIIHMCQKFGLPVDYQPWNEAALYQALTHDKKARGNSIKLVLVPELGSASIHQIPLEEMKEFLKK.

Residues 71–76 (EGEASK), 105–109 (GVVGD), 129–130 (TS), K142, and K151 each bind NAD(+). Zn(2+) contacts are provided by E184, H246, and H263.

The protein belongs to the sugar phosphate cyclases superfamily. Dehydroquinate synthase family. Co(2+) is required as a cofactor. The cofactor is Zn(2+). It depends on NAD(+) as a cofactor.

It is found in the cytoplasm. It catalyses the reaction 7-phospho-2-dehydro-3-deoxy-D-arabino-heptonate = 3-dehydroquinate + phosphate. Its pathway is metabolic intermediate biosynthesis; chorismate biosynthesis; chorismate from D-erythrose 4-phosphate and phosphoenolpyruvate: step 2/7. Functionally, catalyzes the conversion of 3-deoxy-D-arabino-heptulosonate 7-phosphate (DAHP) to dehydroquinate (DHQ). This Streptococcus sanguinis (strain SK36) protein is 3-dehydroquinate synthase.